A 220-amino-acid polypeptide reads, in one-letter code: 7-cyano-7-deazaguanine synthase (220 aa).

10-20 (FSGGQDSTTCL) serves as a coordination point for ATP. Residues C186, C195, C198, and C201 each contribute to the Zn(2+) site.

This sequence belongs to the QueC family. In terms of assembly, homodimer. It depends on Zn(2+) as a cofactor.

It catalyses the reaction 7-carboxy-7-deazaguanine + NH4(+) + ATP = 7-cyano-7-deazaguanine + ADP + phosphate + H2O + H(+). Its pathway is purine metabolism; 7-cyano-7-deazaguanine biosynthesis. In terms of biological role, catalyzes the ATP-dependent conversion of 7-carboxy-7-deazaguanine (CDG) to 7-cyano-7-deazaguanine (preQ(0)). The polypeptide is 7-cyano-7-deazaguanine synthase (Bacillus thuringiensis (strain Al Hakam)).